The primary structure comprises 70 residues: Small ribosomal subunit protein bS21C (70 aa).

It belongs to the bacterial ribosomal protein bS21 family.

The protein is Small ribosomal subunit protein bS21C of Burkholderia pseudomallei (strain 1710b).